A 371-amino-acid chain; its full sequence is 4-hydroxy-3-methylbut-2-en-1-yl diphosphate synthase (flavodoxin) (371 aa).

The [4Fe-4S] cluster site is built by Cys270, Cys273, Cys305, and Glu312.

It belongs to the IspG family. The cofactor is [4Fe-4S] cluster.

The enzyme catalyses (2E)-4-hydroxy-3-methylbut-2-enyl diphosphate + oxidized [flavodoxin] + H2O + 2 H(+) = 2-C-methyl-D-erythritol 2,4-cyclic diphosphate + reduced [flavodoxin]. Its pathway is isoprenoid biosynthesis; isopentenyl diphosphate biosynthesis via DXP pathway; isopentenyl diphosphate from 1-deoxy-D-xylulose 5-phosphate: step 5/6. Functionally, converts 2C-methyl-D-erythritol 2,4-cyclodiphosphate (ME-2,4cPP) into 1-hydroxy-2-methyl-2-(E)-butenyl 4-diphosphate. The polypeptide is 4-hydroxy-3-methylbut-2-en-1-yl diphosphate synthase (flavodoxin) (Shewanella piezotolerans (strain WP3 / JCM 13877)).